Here is a 788-residue protein sequence, read N- to C-terminus: Choline transporter-like protein 1 (788 aa).

A helical membrane pass occupies residues Phe98–Gly118. Asn276 carries an N-linked (GlcNAc...) asparagine glycan. A run of 4 helical transmembrane segments spans residues Trp329–Ile349, Leu352–Gly372, Phe409–Ile429, and Leu458–Leu478. Asn497 is a glycosylation site (N-linked (GlcNAc...) asparagine). 5 helical membrane-spanning segments follow: residues Leu531 to Gly551, Leu583 to Leu603, Trp620 to Thr640, Ala679 to Phe699, and Tyr718 to Phe738.

The protein belongs to the CTL (choline transporter-like) family.

It is found in the membrane. The sequence is that of Choline transporter-like protein 1 (chtl-1) from Caenorhabditis briggsae.